Consider the following 143-residue polypeptide: MLIGEYKHVVDNKGRVTLPSKFREELGEKFILTKGLDNCLFGYSLKEWAVLEEKLKKLPLTSKDARAFLRFFFAGACECEVDKQGRILIPQNLREYANLQKEVFIIGVMTRIEIWSEENWQREMADESLSVEKIAQKMEELGI.

SpoVT-AbrB domains are found at residues 5–47 (EYKH…SLKE) and 76–119 (ACEC…SEEN).

This sequence belongs to the MraZ family. In terms of assembly, forms oligomers.

It is found in the cytoplasm. The protein resides in the nucleoid. The chain is Transcriptional regulator MraZ from Caldicellulosiruptor saccharolyticus (strain ATCC 43494 / DSM 8903 / Tp8T 6331).